The following is a 1099-amino-acid chain: Probable inorganic carbon transporter subunit DabA (1099 aa).

The segment at 175–194 is disordered; the sequence is RQGRRRFATTERRTRRTRRS. Over residues 176-194 the composition is skewed to basic residues; that stretch reads QGRRRFATTERRTRRTRRS. Zn(2+) is bound by residues Cys-514, Asp-516, His-722, and Cys-737. The interval 1071-1099 is disordered; that stretch reads AGAGAAQPTRDAIELPEQASGPLPARDGQ.

Belongs to the inorganic carbon transporter (TC 9.A.2) DabA family. Forms a complex with DabB. The cofactor is Zn(2+).

It localises to the cell membrane. In terms of biological role, part of an energy-coupled inorganic carbon pump. The sequence is that of Probable inorganic carbon transporter subunit DabA from Parafrankia sp. (strain EAN1pec).